The sequence spans 414 residues: Enolase (414 aa).

Q162 provides a ligand contact to (2R)-2-phosphoglycerate. E204 (proton donor) is an active-site residue. The Mg(2+) site is built by D239, E280, and D307. Residues K332, R361, S362, and K383 each coordinate (2R)-2-phosphoglycerate. K332 (proton acceptor) is an active-site residue.

Belongs to the enolase family. The cofactor is Mg(2+).

The protein localises to the cytoplasm. The protein resides in the secreted. It localises to the cell surface. The catalysed reaction is (2R)-2-phosphoglycerate = phosphoenolpyruvate + H2O. The protein operates within carbohydrate degradation; glycolysis; pyruvate from D-glyceraldehyde 3-phosphate: step 4/5. Catalyzes the reversible conversion of 2-phosphoglycerate (2-PG) into phosphoenolpyruvate (PEP). It is essential for the degradation of carbohydrates via glycolysis. In Campylobacter jejuni (strain RM1221), this protein is Enolase.